The sequence spans 223 residues: Serine/threonine/tyrosine-interacting protein B (223 aa).

One can recognise a Tyrosine-protein phosphatase domain in the interval 28–176; that stretch reads EMQEILPGLF…LQEYEAIYLA (149 aa).

This sequence belongs to the protein-tyrosine phosphatase family. Non-receptor class subfamily.

In terms of biological role, catalytically inactive phosphatase. The sequence is that of Serine/threonine/tyrosine-interacting protein B (styx-b) from Xenopus laevis (African clawed frog).